Here is a 362-residue protein sequence, read N- to C-terminus: 3-ketodihydrosphingosine reductase gsl-3 (362 aa).

An NADP(+)-binding site is contributed by L55. NADPH contacts are provided by G58, S60, G62, and R83. The GXSXG signature appears at 58–62; that stretch reads GASEG. An NADP(+)-binding site is contributed by N84. 2 residues coordinate NADPH: R87 and D113. NADP(+) contacts are provided by D113, R176, Y216, K220, I252, and S254. The active-site Proton acceptor is the Y216. K220 acts as the Lowers pKa of active site Tyr in catalysis. A helical membrane pass occupies residues 318–338; the sequence is NNWVLDTLMGWLIPIIYFFVL.

This sequence belongs to the short-chain dehydrogenases/reductases (SDR) family.

It is found in the endoplasmic reticulum membrane. It carries out the reaction sphinganine + NADP(+) = 3-oxosphinganine + NADPH + H(+). It functions in the pathway lipid metabolism; sphingolipid metabolism. Its function is as follows. Catalyzes the reduction of 3'-oxosphinganine (3-ketodihydrosphingosine/KDS) to sphinganine (dihydrosphingosine/DHS), the second step of de novo sphingolipid biosynthesis. This chain is 3-ketodihydrosphingosine reductase gsl-3 (gsl-3), found in Neurospora crassa (strain ATCC 24698 / 74-OR23-1A / CBS 708.71 / DSM 1257 / FGSC 987).